The chain runs to 504 residues: MEDDVTTTERLPAPPLDTASKRVGFISLGCPKALVDSERILTQLRAEGYEVAPSYEGADAVIVNTCGFITPAVEESLSAIGEALDATGKVIVTGCLGERPEKIMERHPKVAAITGSEAVDDVMGHVRELLPIDQGAFTGLLPVAAPGMRAGVETPQRENTRHGDVFAPSVKLTPRHYAYVKVAEGCNHTCAFCIIPKLRGLQVSRDAGAVLYEAYRLIAGGTKELMIIAQDTSAYGVDLRYRESEFQGEQVRAHLTDLAVKLGEMGAWVRMHYVYPYPHVDRVVELMAQGKVLPYLDIPLQHASPKILKLMRRPGAGKQLDTIRRWREICPELVIRSTFIVGFPGETEEDFQELLQFLEDARLDRVGAFPYSDIEEADANALPGAVPEEVKQERLARFMEVAQRISTEKLSEKVGRVMDVIIDEFNDDEDDQPGTRLIGRTKGDAPGIDGQVYLYAGDFAGLVKIGDIVRARIEDSDEYDLFGEVIEKPEWKPNVPQLGHFGKH.

In terms of domain architecture, MTTase N-terminal spans Lys21 to Pro131. Cys30, Cys66, Cys95, Cys186, Cys190, and Cys193 together coordinate [4Fe-4S] cluster. The Radical SAM core domain maps to Leu172–Glu408. The TRAM domain occupies Ser411–Glu487.

The protein belongs to the methylthiotransferase family. RimO subfamily. Requires [4Fe-4S] cluster as cofactor.

It localises to the cytoplasm. The enzyme catalyses L-aspartate(89)-[ribosomal protein uS12]-hydrogen + (sulfur carrier)-SH + AH2 + 2 S-adenosyl-L-methionine = 3-methylsulfanyl-L-aspartate(89)-[ribosomal protein uS12]-hydrogen + (sulfur carrier)-H + 5'-deoxyadenosine + L-methionine + A + S-adenosyl-L-homocysteine + 2 H(+). Catalyzes the methylthiolation of an aspartic acid residue of ribosomal protein uS12. The sequence is that of Ribosomal protein uS12 methylthiotransferase RimO from Deinococcus radiodurans (strain ATCC 13939 / DSM 20539 / JCM 16871 / CCUG 27074 / LMG 4051 / NBRC 15346 / NCIMB 9279 / VKM B-1422 / R1).